Here is a 602-residue protein sequence, read N- to C-terminus: Prostaglandin G/H synthase 1 (602 aa).

The signal sequence occupies residues 1 to 26 (MSRRSLSLQFPLLLLLLLLPPPPVLL). Positions 34–72 (PVNPCCYYPCQNQGVCVRFGLDHYQCDCTRTGYSGPNCT) constitute an EGF-like domain. 4 disulfides stabilise this stretch: Cys38–Cys49, Cys39–Cys161, Cys43–Cys59, and Cys61–Cys71. Asn70, Asn106, and Asn146 each carry an N-linked (GlcNAc...) asparagine glycan. Residue His209 is the Proton acceptor of the active site. The active-site For cyclooxygenase activity is Tyr387. Heme b is bound at residue His390. The N-linked (GlcNAc...) asparagine glycan is linked to Asn412. A disulfide bridge connects residues Cys571 and Cys577.

It belongs to the prostaglandin G/H synthase family. As to quaternary structure, homodimer. Heme b is required as a cofactor.

It is found in the microsome membrane. Its subcellular location is the endoplasmic reticulum membrane. The enzyme catalyses (5Z,8Z,11Z,14Z)-eicosatetraenoate + AH2 + 2 O2 = prostaglandin H2 + A + H2O. It carries out the reaction (5Z,8Z,11Z,14Z)-eicosatetraenoate + 2 O2 = prostaglandin G2. It catalyses the reaction prostaglandin G2 + AH2 = prostaglandin H2 + A + H2O. The catalysed reaction is (9Z,12Z)-octadecadienoate + AH2 + O2 = (9R)-hydroxy-(10E,12Z)-octadecadienoate + A + H2O. The enzyme catalyses (9Z,12Z)-octadecadienoate + AH2 + O2 = (9S)-hydroxy-(10E,12Z)-octadecadienoate + A + H2O. It carries out the reaction (9Z,12Z)-octadecadienoate + AH2 + O2 = (13S)-hydroxy-(9Z,11E)-octadecadienoate + A + H2O. It catalyses the reaction (9Z,12Z)-octadecadienoate + AH2 + O2 = (13R)-hydroxy-(9Z,11E)-octadecadienoate + A + H2O. Its pathway is lipid metabolism; prostaglandin biosynthesis. With respect to regulation, the cyclooxygenase activity is inhibited by nonsteroidal anti-inflammatory drugs (NSAIDs) including ibuprofen, flurbiprofen, ketoprofen, naproxen, flurbiprofen, anirolac, fenclofenac and diclofenac. Its function is as follows. Dual cyclooxygenase and peroxidase that plays an important role in the biosynthesis pathway of prostanoids, a class of C20 oxylipins mainly derived from arachidonate ((5Z,8Z,11Z,14Z)-eicosatetraenoate, AA, C20:4(n-6)), with a particular role in the inflammatory response. The cyclooxygenase activity oxygenates AA to the hydroperoxy endoperoxide prostaglandin G2 (PGG2), and the peroxidase activity reduces PGG2 to the hydroxy endoperoxide prostaglandin H2 (PGH2), the precursor of all 2-series prostaglandins and thromboxanes. This complex transformation is initiated by abstraction of hydrogen at carbon 13 (with S-stereochemistry), followed by insertion of molecular O2 to form the endoperoxide bridge between carbon 9 and 11 that defines prostaglandins. The insertion of a second molecule of O2 (bis-oxygenase activity) yields a hydroperoxy group in PGG2 that is then reduced to PGH2 by two electrons. Involved in the constitutive production of prostanoids in particular in the stomach and platelets. In gastric epithelial cells, it is a key step in the generation of prostaglandins, such as prostaglandin E2 (PGE2), which plays an important role in cytoprotection. In platelets, it is involved in the generation of thromboxane A2 (TXA2), which promotes platelet activation and aggregation, vasoconstriction and proliferation of vascular smooth muscle cells. Can also use linoleate (LA, (9Z,12Z)-octadecadienoate, C18:2(n-6)) as substrate and produce hydroxyoctadecadienoates (HODEs) in a regio- and stereospecific manner, being (9R)-HODE ((9R)-hydroxy-(10E,12Z)-octadecadienoate) and (13S)-HODE ((13S)-hydroxy-(9Z,11E)-octadecadienoate) its major products. The chain is Prostaglandin G/H synthase 1 from Rattus norvegicus (Rat).